The chain runs to 159 residues: Phosphopantetheine adenylyltransferase (159 aa).

Thr-9 contacts substrate. ATP contacts are provided by residues Thr-9 to Phe-10 and His-17. 3 residues coordinate substrate: Lys-41, Leu-73, and Arg-87. Residues Gly-88–Arg-90, Glu-98, and Tyr-123–Thr-129 each bind ATP.

This sequence belongs to the bacterial CoaD family. In terms of assembly, homohexamer. It depends on Mg(2+) as a cofactor.

The protein localises to the cytoplasm. It catalyses the reaction (R)-4'-phosphopantetheine + ATP + H(+) = 3'-dephospho-CoA + diphosphate. The protein operates within cofactor biosynthesis; coenzyme A biosynthesis; CoA from (R)-pantothenate: step 4/5. Reversibly transfers an adenylyl group from ATP to 4'-phosphopantetheine, yielding dephospho-CoA (dPCoA) and pyrophosphate. This chain is Phosphopantetheine adenylyltransferase, found in Pseudomonas putida (strain GB-1).